The sequence spans 257 residues: Small ribosomal subunit protein uS2 (257 aa).

A disordered region spans residues 237–257; the sequence is MDEADGSEAEPEDPAAPESAE. Residues 240–257 are compositionally biased toward acidic residues; that stretch reads ADGSEAEPEDPAAPESAE.

The protein belongs to the universal ribosomal protein uS2 family.

The polypeptide is Small ribosomal subunit protein uS2 (Chlorobium phaeovibrioides (strain DSM 265 / 1930) (Prosthecochloris vibrioformis (strain DSM 265))).